A 292-amino-acid polypeptide reads, in one-letter code: Small ribosomal subunit protein uS2 (292 aa).

The disordered stretch occupies residues 265-292 (TETALDWSDEPVAGDWAAEPAADAQGGW). Over residues 277–292 (AGDWAAEPAADAQGGW) the composition is skewed to low complexity.

It belongs to the universal ribosomal protein uS2 family. In terms of assembly, component of the small ribosomal subunit. Mature ribosomes consist of a small (40S) and a large (60S) subunit. The 40S subunit contains about 33 different proteins and 1 molecule of RNA (18S). The 60S subunit contains about 49 different proteins and 3 molecules of RNA (25S, 5.8S and 5S). Interacts with RPS21.

The protein localises to the cytoplasm. In terms of biological role, required for the assembly and/or stability of the 40S ribosomal subunit. Required for the processing of the 20S rRNA-precursor to mature 18S rRNA in a late step of the maturation of 40S ribosomal subunits. This chain is Small ribosomal subunit protein uS2, found in Cryptococcus neoformans var. neoformans serotype D (strain B-3501A) (Filobasidiella neoformans).